Reading from the N-terminus, the 194-residue chain is Dephospho-CoA kinase (194 aa).

In terms of domain architecture, DPCK spans 3–194; the sequence is TIGLTGGIGS…EQVDGFWGGL (192 aa). 11-16 is a binding site for ATP; sequence GSGKST.

Belongs to the CoaE family.

The protein localises to the cytoplasm. The catalysed reaction is 3'-dephospho-CoA + ATP = ADP + CoA + H(+). The protein operates within cofactor biosynthesis; coenzyme A biosynthesis; CoA from (R)-pantothenate: step 5/5. Catalyzes the phosphorylation of the 3'-hydroxyl group of dephosphocoenzyme A to form coenzyme A. The sequence is that of Dephospho-CoA kinase from Corynebacterium jeikeium (strain K411).